The primary structure comprises 378 residues: Protein RecA (378 aa).

Position 79 to 86 (79 to 86) interacts with ATP; it reads GPESSGKT.

Belongs to the RecA family.

It localises to the cytoplasm. Can catalyze the hydrolysis of ATP in the presence of single-stranded DNA, the ATP-dependent uptake of single-stranded DNA by duplex DNA, and the ATP-dependent hybridization of homologous single-stranded DNAs. It interacts with LexA causing its activation and leading to its autocatalytic cleavage. The protein is Protein RecA of Streptococcus pyogenes serotype M1.